Here is a 369-residue protein sequence, read N- to C-terminus: Glutamate 5-kinase (369 aa).

K11 contributes to the ATP binding site. Residues S51, D138, and N150 each coordinate substrate. ATP contacts are provided by residues 170 to 171 (TD) and 212 to 218 (TGGMATK). A PUA domain is found at 277 to 355 (KGSIVIDEGA…QDIYAVLGYE (79 aa)).

The protein belongs to the glutamate 5-kinase family.

Its subcellular location is the cytoplasm. The catalysed reaction is L-glutamate + ATP = L-glutamyl 5-phosphate + ADP. Its pathway is amino-acid biosynthesis; L-proline biosynthesis; L-glutamate 5-semialdehyde from L-glutamate: step 1/2. Catalyzes the transfer of a phosphate group to glutamate to form L-glutamate 5-phosphate. This Aliivibrio fischeri (strain ATCC 700601 / ES114) (Vibrio fischeri) protein is Glutamate 5-kinase.